The chain runs to 503 residues: Betaine aldehyde dehydrogenase 2 (503 aa).

161–170 serves as a coordination point for betaine aldehyde; sequence WNYPLLMATW. An NAD(+)-binding site is contributed by 238–243; it reads GSYETG. Residues Glu-260, 292–295, and Cys-453 each bind betaine aldehyde; that span reads QICS. Residues Glu-260 and Cys-294 contribute to the active site. Residues 260 to 261 and Cys-294 contribute to the 4-aminobutanal site; that span reads EL. Trp-459 lines the 4-aminobutanal pocket. Positions 501 to 503 match the Microbody targeting signal motif; that stretch reads SKL.

The protein belongs to the aldehyde dehydrogenase family. Homodimer.

Its subcellular location is the peroxisome. The protein localises to the cytoplasm. It catalyses the reaction betaine aldehyde + NAD(+) + H2O = glycine betaine + NADH + 2 H(+). It participates in amine and polyamine biosynthesis; betaine biosynthesis via choline pathway; betaine from betaine aldehyde: step 1/1. Its function is as follows. Dehydrogenase that can use N-acetyl-c-aminobutyraldehyde (NAGABald), gamma-guanidinobutyraldehyde (GGBald), betaine aldehyde (Bet-ald), gamma-aminobutyraldehyde (GAB-ald), acetaldehyde, 4-aminobutylaldehyde (AB-ald), 3-aminopropionaldehyde (AP-ald), 4-N-trimethylaminobutyraldehyde (TMAB-ald) and 3-N-trimethylaminopropionaldehyde (TMAP-ald) as substrates. Catalyzes the oxidation of GAB-ald more efficiently than Bet-ald. Mediates the conversion of GAB-ald into gamma-aminobutyric acid (GABA), and prevents the formation of 2-acetyl-1-pyrroline (2AP) which gives fragrant rice its aromatic properties. The chain is Betaine aldehyde dehydrogenase 2 (BADH2) from Oryza sativa subsp. indica (Rice).